The following is a 179-amino-acid chain: Large ribosomal subunit protein uL5 (179 aa).

Belongs to the universal ribosomal protein uL5 family. Part of the 50S ribosomal subunit; part of the 5S rRNA/L5/L18/L25 subcomplex. Contacts the 5S rRNA and the P site tRNA. Forms a bridge to the 30S subunit in the 70S ribosome.

In terms of biological role, this is one of the proteins that bind and probably mediate the attachment of the 5S RNA into the large ribosomal subunit, where it forms part of the central protuberance. In the 70S ribosome it contacts protein S13 of the 30S subunit (bridge B1b), connecting the 2 subunits; this bridge is implicated in subunit movement. Contacts the P site tRNA; the 5S rRNA and some of its associated proteins might help stabilize positioning of ribosome-bound tRNAs. This Carboxydothermus hydrogenoformans (strain ATCC BAA-161 / DSM 6008 / Z-2901) protein is Large ribosomal subunit protein uL5.